Reading from the N-terminus, the 623-residue chain is UvrABC system protein C (623 aa).

Residues glycine 28–valine 105 enclose the GIY-YIG domain. Residues threonine 215 to valine 250 form the UVR domain.

This sequence belongs to the UvrC family. Interacts with UvrB in an incision complex.

The protein localises to the cytoplasm. Its function is as follows. The UvrABC repair system catalyzes the recognition and processing of DNA lesions. UvrC both incises the 5' and 3' sides of the lesion. The N-terminal half is responsible for the 3' incision and the C-terminal half is responsible for the 5' incision. The polypeptide is UvrABC system protein C (Ruegeria pomeroyi (strain ATCC 700808 / DSM 15171 / DSS-3) (Silicibacter pomeroyi)).